Reading from the N-terminus, the 632-residue chain is tRNA uridine 5-carboxymethylaminomethyl modification enzyme MnmG (632 aa).

Position 13-18 (glycine 13–glycine 18) interacts with FAD. Glycine 273 to phenylalanine 287 provides a ligand contact to NAD(+).

The protein belongs to the MnmG family. Homodimer. Heterotetramer of two MnmE and two MnmG subunits. FAD is required as a cofactor.

It localises to the cytoplasm. In terms of biological role, NAD-binding protein involved in the addition of a carboxymethylaminomethyl (cmnm) group at the wobble position (U34) of certain tRNAs, forming tRNA-cmnm(5)s(2)U34. The sequence is that of tRNA uridine 5-carboxymethylaminomethyl modification enzyme MnmG from Psychrobacter cryohalolentis (strain ATCC BAA-1226 / DSM 17306 / VKM B-2378 / K5).